Here is a 151-residue protein sequence, read N- to C-terminus: Nucleoside diphosphate kinase (151 aa).

ATP-binding residues include K11, F59, R87, T93, R104, and N114. H117 functions as the Pros-phosphohistidine intermediate in the catalytic mechanism.

This sequence belongs to the NDK family. Requires Mg(2+) as cofactor.

It catalyses the reaction a 2'-deoxyribonucleoside 5'-diphosphate + ATP = a 2'-deoxyribonucleoside 5'-triphosphate + ADP. The catalysed reaction is a ribonucleoside 5'-diphosphate + ATP = a ribonucleoside 5'-triphosphate + ADP. Major role in the synthesis of nucleoside triphosphates other than ATP. The ATP gamma phosphate is transferred to the NDP beta phosphate via a ping-pong mechanism, using a phosphorylated active-site intermediate. The polypeptide is Nucleoside diphosphate kinase (NDK1) (Eremothecium gossypii (strain ATCC 10895 / CBS 109.51 / FGSC 9923 / NRRL Y-1056) (Yeast)).